The primary structure comprises 192 residues: Fumarylpyruvate hydrolase (192 aa).

A divalent metal cation contacts are provided by glutamate 41, glutamate 43, and aspartate 72.

This sequence belongs to the FAH family. The cofactor is Mg(2+). Mn(2+) is required as a cofactor.

It carries out the reaction 3-fumarylpyruvate + H2O = fumarate + pyruvate + H(+). It participates in aromatic compound metabolism; naphthalene degradation. In terms of biological role, involved in the catabolism of gentisate (2,5-dihydroxybenzoate) a key intermediates in the aerobic pathways for the metabolism of a large number of aromatic compoun such as naphthalene. Catalyzes the hydrolytic cleavage of fumarylpyruvate to form fumarate and pyruvate. The polypeptide is Fumarylpyruvate hydrolase (Ralstonia sp).